The sequence spans 209 residues: Claudin-4 (209 aa).

The Cytoplasmic segment spans residues 1 to 7; sequence MASMGLQ. Residues 1 to 103 form an interaction with EPHA2 region; the sequence is MASMGLQVMG…GVLLSVVGGK (103 aa). Residues 8 to 28 traverse the membrane as a helical segment; sequence VMGIALAVLGWLAVMLCCALP. The Extracellular segment spans residues 29 to 81; that stretch reads MWRVTAFIGSNIVTSQTIWEGLWMNCVVQSTGQMQCKVYDSLLALPQDLQAAR. A disulfide bridge connects residues Cys-54 and Cys-64. Residues 82 to 102 traverse the membrane as a helical segment; sequence ALVIISIIVAALGVLLSVVGG. Over 103–117 the chain is Cytoplasmic; sequence KCTNCLEDESAKAKT. Residues 118–138 form a helical membrane-spanning segment; the sequence is MIVAGVVFLLAGLMVIVPVSW. Residues 139–160 lie on the Extracellular side of the membrane; it reads TAHNIIQDFYNPLVASGQKREM. Residues 161–181 form a helical membrane-spanning segment; sequence GASLYVGWAASGLLLLGGGLL. The Cytoplasmic segment spans residues 182 to 209; the sequence is CCNCPPRTDKPYSAKYSAARSAAASNYV. The residue at position 208 (Tyr-208) is a Phosphotyrosine; by EPHA2. Positions 208-209 are interactions with TJP1, TJP2 and TJP3; the sequence is YV.

Belongs to the claudin family. As to quaternary structure, can form heteropolymeric strands with other claudins. Interacts with CLDN8. Interacts with CLDN1. Directly interacts with TJP1/ZO-1. Interacts with TJP2/ZO-2 and TJP3/ZO-3. Interacts with EPHA2; phosphorylates CLDN4 and may regulate tight junctions. (Microbial infection) Interacts (via both extracellular domains) with Clostridium perfringens enterotoxin CPE; the interaction may disrupt claudin assembly in tight junctions. In terms of processing, phosphorylated. Phosphorylation by EPHA2 is stimulated by EFNA1 and alters interaction with TJP1.

It localises to the cell junction. Its subcellular location is the tight junction. The protein resides in the cell membrane. It carries out the reaction chloride(in) = chloride(out). It catalyses the reaction bromide(in) = bromide(out). The catalysed reaction is iodide(out) = iodide(in). The enzyme catalyses fluoride(in) = fluoride(out). Can associate with other claudins to regulate tight junction structural and functional strand dynamics. May coassemble with CLDN8 into tight junction strands containing anion-selective channels that convey paracellular chloride permeability in renal collecting ducts. May integrate into CLDN3 strands to modulate localized tight junction barrier properties. May disrupt strand assembly of channel-forming CLDN2 and CLDN15 and inhibit cation conductance. Cannot form tight junction strands on its own. This is Claudin-4 from Homo sapiens (Human).